Reading from the N-terminus, the 471-residue chain is Trigger factor (471 aa).

In terms of domain architecture, PPIase FKBP-type spans 169–254; the sequence is EDRVTIDYLG…VKEVAKPNEL (86 aa). Residues 435–471 form a disordered region; sequence VSKEELTAEDEDAASEAKPAKKAAAKKKAEEGKSEEA. Basic and acidic residues predominate over residues 461-471; that stretch reads KKAEEGKSEEA.

The protein belongs to the FKBP-type PPIase family. Tig subfamily.

It localises to the cytoplasm. The catalysed reaction is [protein]-peptidylproline (omega=180) = [protein]-peptidylproline (omega=0). Functionally, involved in protein export. Acts as a chaperone by maintaining the newly synthesized protein in an open conformation. Functions as a peptidyl-prolyl cis-trans isomerase. This chain is Trigger factor, found in Brucella abortus (strain S19).